We begin with the raw amino-acid sequence, 130 residues long: Histone H2A (130 aa).

An N6-acetyllysine mark is found at Lys4 and Lys7. Gln105 is subject to N5-methylglutamine. Ser127 is subject to Phosphoserine. The [ST]-Q motif signature appears at 127-128; the sequence is SQ.

It belongs to the histone H2A family. As to quaternary structure, the nucleosome is a histone octamer containing two molecules each of H2A, H2B, H3 and H4 assembled in one H3-H4 heterotetramer and two H2A-H2B heterodimers. The octamer wraps approximately 147 bp of DNA. Post-translationally, phosphorylated to form H2AS128ph (gamma-H2A) in response to DNA double-strand breaks (DSBs) generated by exogenous genotoxic agents and by stalled replication forks. Phosphorylation is dependent on the DNA damage checkpoint kinases MEC1/ATR and TEL1/ATM, spreads on either side of a detected DSB site and may mark the surrounding chromatin for recruitment of proteins required for DNA damage signaling and repair. Gamma-H2A is removed from the DNA prior to the strand invasion-primer extension step of the repair process and subsequently dephosphorylated by PPH3, a component of the histone H2A phosphatase complex (HTP-C). Dephosphorylation is necessary for efficient recovery from the DNA damage checkpoint. Acetylated by ESA1 to form H2AK4ac and H2AK7ac.

The protein localises to the nucleus. The protein resides in the chromosome. Functionally, core component of nucleosome which plays a central role in DNA double strand break (DSB) repair. Nucleosomes wrap and compact DNA into chromatin, limiting DNA accessibility to the cellular machineries which require DNA as a template. Histones thereby play a central role in transcription regulation, DNA repair, DNA replication and chromosomal stability. DNA accessibility is regulated via a complex set of post-translational modifications of histones, also called histone code, and nucleosome remodeling. This chain is Histone H2A (HTA1), found in Kluyveromyces lactis (strain ATCC 8585 / CBS 2359 / DSM 70799 / NBRC 1267 / NRRL Y-1140 / WM37) (Yeast).